A 71-amino-acid polypeptide reads, in one-letter code: Pro-glucagon (71 aa).

The protein belongs to the glucagon family.

It localises to the secreted. Plays a key role in glucose metabolism and homeostasis. Regulates blood glucose by increasing gluconeogenesis and decreasing glycolysis. The chain is Pro-glucagon (gcg) from Ictalurus punctatus (Channel catfish).